We begin with the raw amino-acid sequence, 743 residues long: Catalase-peroxidase (743 aa).

Polar residues predominate over residues 1-15 (MSSDSRPPQPDTSTQ). The interval 1 to 40 (MSSDSRPPQPDTSTQSNSESESPAISSPTPQDHAPMTNRD) is disordered. Positions 16–28 (SNSESESPAISSP) are enriched in low complexity. A cross-link (tryptophyl-tyrosyl-methioninium (Trp-Tyr) (with M-259)) is located at residues 110 to 233 (WHAAGTYRIQ…YGATTMGLIY (124 aa)). Histidine 111 serves as the catalytic Proton acceptor. Residues 233–259 (YVNPEGPEGKPDPVAAAHDIRETFARM) constitute a cross-link (tryptophyl-tyrosyl-methioninium (Tyr-Met) (with W-110)). Histidine 274 is a heme b binding site. A disordered region spans residues 490 to 511 (DKRGGANGGRLRLEPQKSWESN).

The protein belongs to the peroxidase family. Peroxidase/catalase subfamily. As to quaternary structure, homodimer or homotetramer. Heme b serves as cofactor. Post-translationally, formation of the three residue Trp-Tyr-Met cross-link is important for the catalase, but not the peroxidase activity of the enzyme.

The enzyme catalyses H2O2 + AH2 = A + 2 H2O. It catalyses the reaction 2 H2O2 = O2 + 2 H2O. In terms of biological role, bifunctional enzyme with both catalase and broad-spectrum peroxidase activity. In Mycobacterium ulcerans (strain Agy99), this protein is Catalase-peroxidase.